Here is a 271-residue protein sequence, read N- to C-terminus: Coiled-coil domain-containing protein ORF29 (271 aa).

A disordered region spans residues 1-39; it reads MNEKTESEIFEEQNSLYKPIKQEKKTPSTPESEDKNDQS. Basic and acidic residues predominate over residues 20–37; sequence IKQEKKTPSTPESEDKND. The stretch at 208–228 forms a coiled coil; sequence RATQTQEILLNSLRKNLQMLE.

The polypeptide is Coiled-coil domain-containing protein ORF29 (Helicobacter pylori (strain 35A)).